A 362-amino-acid polypeptide reads, in one-letter code: Histidinol-phosphate aminotransferase 2 (362 aa).

N6-(pyridoxal phosphate)lysine is present on lysine 222.

Belongs to the class-II pyridoxal-phosphate-dependent aminotransferase family. Histidinol-phosphate aminotransferase subfamily. Homodimer. Requires pyridoxal 5'-phosphate as cofactor.

The catalysed reaction is L-histidinol phosphate + 2-oxoglutarate = 3-(imidazol-4-yl)-2-oxopropyl phosphate + L-glutamate. Its pathway is amino-acid biosynthesis; L-histidine biosynthesis; L-histidine from 5-phospho-alpha-D-ribose 1-diphosphate: step 7/9. In Carboxydothermus hydrogenoformans (strain ATCC BAA-161 / DSM 6008 / Z-2901), this protein is Histidinol-phosphate aminotransferase 2.